A 362-amino-acid polypeptide reads, in one-letter code: Peptide chain release factor 1 (362 aa).

Residue glutamine 237 is modified to N5-methylglutamine.

It belongs to the prokaryotic/mitochondrial release factor family. Post-translationally, methylated by PrmC. Methylation increases the termination efficiency of RF1.

The protein localises to the cytoplasm. Peptide chain release factor 1 directs the termination of translation in response to the peptide chain termination codons UAG and UAA. This Legionella pneumophila (strain Corby) protein is Peptide chain release factor 1.